We begin with the raw amino-acid sequence, 469 residues long: Putative dipeptidase SH1171 (469 aa).

Residue H84 participates in Zn(2+) binding. Residue D86 is part of the active site. Zn(2+) is bound at residue D115. E149 (proton acceptor) is an active-site residue. Residues E150, D173, and H440 each coordinate Zn(2+).

The protein belongs to the peptidase M20A family. It depends on Zn(2+) as a cofactor.

The protein is Putative dipeptidase SH1171 of Staphylococcus haemolyticus (strain JCSC1435).